Consider the following 848-residue polypeptide: Leucine--tRNA ligase (848 aa).

The disordered stretch occupies residues 1–21 (MTENTPGTSAPERFDPATADT). The short motif at 51 to 61 (PYPSGRIHIGH) is the 'HIGH' region element. A 'KMSKS' region motif is present at residues 625-629 (KMSKS). Lysine 628 contacts ATP.

The protein belongs to the class-I aminoacyl-tRNA synthetase family.

It localises to the cytoplasm. The catalysed reaction is tRNA(Leu) + L-leucine + ATP = L-leucyl-tRNA(Leu) + AMP + diphosphate. The sequence is that of Leucine--tRNA ligase from Novosphingobium aromaticivorans (strain ATCC 700278 / DSM 12444 / CCUG 56034 / CIP 105152 / NBRC 16084 / F199).